Here is a 267-residue protein sequence, read N- to C-terminus: Malonyl-[acyl-carrier protein] O-methyltransferase (267 aa).

It belongs to the methyltransferase superfamily.

It carries out the reaction malonyl-[ACP] + S-adenosyl-L-methionine = malonyl-[ACP] methyl ester + S-adenosyl-L-homocysteine. It participates in cofactor biosynthesis; biotin biosynthesis. Its function is as follows. Converts the free carboxyl group of a malonyl-thioester to its methyl ester by transfer of a methyl group from S-adenosyl-L-methionine (SAM). It allows to synthesize pimeloyl-ACP via the fatty acid synthetic pathway. This chain is Malonyl-[acyl-carrier protein] O-methyltransferase, found in Yersinia pestis.